An 818-amino-acid polypeptide reads, in one-letter code: Dipeptidyl aminopeptidase B (818 aa).

The Cytoplasmic segment spans residues 1–29 (MEGGEEEVERIPDELFDTKKKHLLDKLIR). A helical; Signal-anchor for type II membrane protein transmembrane segment spans residues 30–45 (VGIILVLLIWGTVLLL). Residues 46 to 818 (KSIPHHSNTP…KRAFDGQFVK (773 aa)) lie on the Lumenal side of the membrane. 7 N-linked (GlcNAc...) asparagine glycosylation sites follow: Asn63, Asn79, Asn110, Asn139, Asn372, Asn392, and Asn421. The Charge relay system role is filled by Ser679. The N-linked (GlcNAc...) asparagine glycan is linked to Asn738. Residues Asp756 and His789 each act as charge relay system in the active site.

Belongs to the peptidase S9B family.

It localises to the vacuole membrane. The polypeptide is Dipeptidyl aminopeptidase B (DAP2) (Saccharomyces cerevisiae (strain ATCC 204508 / S288c) (Baker's yeast)).